A 176-amino-acid polypeptide reads, in one-letter code: Cytochrome b (176 aa).

3 helical membrane passes run 33–53 (FGSL…FLAM), 77–98 (WVLR…YLHV), and 113–133 (WNMG…GYVL). Residues H83 and H97 each coordinate heme b.

Belongs to the cytochrome b family. In terms of assembly, the cytochrome bc1 complex contains 11 subunits: 3 respiratory subunits (MT-CYB, CYC1 and UQCRFS1), 2 core proteins (UQCRC1 and UQCRC2) and 6 low-molecular weight proteins (UQCRH/QCR6, UQCRB/QCR7, UQCRQ/QCR8, UQCR10/QCR9, UQCR11/QCR10 and a cleavage product of UQCRFS1). This cytochrome bc1 complex then forms a dimer. It depends on heme b as a cofactor.

Its subcellular location is the mitochondrion inner membrane. In terms of biological role, component of the ubiquinol-cytochrome c reductase complex (complex III or cytochrome b-c1 complex) that is part of the mitochondrial respiratory chain. The b-c1 complex mediates electron transfer from ubiquinol to cytochrome c. Contributes to the generation of a proton gradient across the mitochondrial membrane that is then used for ATP synthesis. This is Cytochrome b (MT-CYB) from Lasionycteris noctivagans (Silver-haired bat).